The sequence spans 497 residues: Amino acid oxidase fsqB (497 aa).

Residues Val-14, Phe-15, Asp-38, Asn-53, Ala-57, Asn-58, Arg-63, Val-64, and Val-211 each coordinate FAD. An S-8alpha-FAD cysteine modification is found at Cys-414. FAD contacts are provided by Phe-447 and Lys-448.

Belongs to the MSOX/MTOX family. Dimer. FAD is required as a cofactor.

It carries out the reaction (2S,4S,5S)-2-amino-6-(3,4-dihydroxyphenyl)-4-hydroxy-5-(methylamino)hexanoyl-[peptidyl-carrier protein] + O2 = (2S,4S)-2-amino-4-[(3S)-7,8-dihydroxy-1,2,3,4-tetrahydroisoquinolin-3-yl]-4-hydroxybutanoyl-[peptidyl-carrier protein] + H2O2. It catalyses the reaction N-methyl-L-dopa + O2 = (3S)-7,8-dihydroxy-1,2,3,4-tetrahydroisoquinoline-3-carboxylate + H2O2. The catalysed reaction is N-methyl-D-dopa + O2 = (3R)-7,8-dihydroxy-1,2,3,4-tetrahydroisoquinoline-3-carboxylate + H2O2. Its pathway is secondary metabolite biosynthesis. Its function is as follows. Amino acid oxidase; part of the gene cluster that mediates the biosynthesis of the isoquinoline alkaloids fumisoquin A, fumisoquin B and fumisoquin C; as well as small amounts of fumipyrrole as a shunt metabolite. The products of the cluster lead to a brown coloration and are important for growth and conidiation. The nonribosomal peptide synthetase-like protein fsqF, which lacks a canonical condensation domain, is required for addition of a serine-derived dehydroalanine moiety to activated tyrosine but is not essential for the subsequent steps leading to isoquinoline formation. A different enzyme, most likely the ATP-grasp enzyme fsqD, is responsible for activation of tyrosine. Three additional enzymes encoded by the fsq cluster, the N-methyltransferase fsqC, the phenol 2-monooxygenase fsqG and the FAD-dependent oxidase fsqB, catalyze the formation of the isoquinoline ring system in the fumisoquins. FsqB converts the fspF thiolation domain-bound (2S,4S,5S)-2-amino-6-(3,4-dihydroxyphenyl)-4-hydroxy-5-(methylamino)hexanoyl into isoquinoline. The cyclization most likely proceeds via a two-step mechanism, beginning with FAD-dependent oxidation of the methyl group to an iminium species followed by electrophilic attack on the deprotonated phenol. In terms of biological role, is able to convert N-methyl-3,4-dihydroxy-DL-phenylalanine (N-methyl-DOPA) directly into cyclic isoquinoline, in vitro. The absence of the meta-hydroxyl group, as in L-N-methyl-tyrosine, leads to a 25-fold lower rate of reduction and the formation of the demethylated product L-tyrosine, instead of a cyclic product. Does not accept the D-stereoisomer of N-methyltyrosine, in contrast to N-methyl-DOPA, for which both stereoisomers are oxidized with similar rates. The polypeptide is Amino acid oxidase fsqB (Aspergillus fumigatus (strain ATCC MYA-4609 / CBS 101355 / FGSC A1100 / Af293) (Neosartorya fumigata)).